The following is a 550-amino-acid chain: Glucose-6-phosphate isomerase 1 (550 aa).

The Proton donor role is filled by glutamate 358. Active-site residues include histidine 389 and lysine 513.

The protein belongs to the GPI family.

The protein resides in the cytoplasm. It carries out the reaction alpha-D-glucose 6-phosphate = beta-D-fructose 6-phosphate. It functions in the pathway carbohydrate biosynthesis; gluconeogenesis. It participates in carbohydrate degradation; glycolysis; D-glyceraldehyde 3-phosphate and glycerone phosphate from D-glucose: step 2/4. Its function is as follows. Catalyzes the reversible isomerization of glucose-6-phosphate to fructose-6-phosphate. The chain is Glucose-6-phosphate isomerase 1 from Streptomyces coelicolor (strain ATCC BAA-471 / A3(2) / M145).